The following is a 410-amino-acid chain: MAAEIHSRPQSSRPVLLSKIEGHQDAVTAALLIPKEDGVITASEDRTIRVWLKRDSGQYWPSIYHTMASPCSAMAYHHDSRRIFVGQDNGAVMEFHVSEDFNKMNFIKTYPAHQNRVSAIIFSLATEWVISTGHDKCVSWMCTRSGNMLGRHFFTSWASCLQYDFDTQYAFVGDYSGQITLLKLEQNTCSVITTLKGHEGSVACLWWDPIQRLLFSGASDNSIIMWDIGGRKGRTLLLQGHHDKVQSLCYLQLTRQLVSCSSDGGIAVWNMDVSREEAPQWLESDSCQKCEQPFFWNIKQMWDTKTLGLRQHHCRKCGQAVCGKCSSKRSSYPVMGFEFQVRVCDSCYDSIKDEDRTSLATFHEGKHNISHMSMDIARGLMVTCGTDRIVKIWDMTPVVGCSLATGFSPH.

WD repeat units lie at residues 22–61 (GHQD…QYWP), 66–105 (TMAS…NKMN), 112–150 (AHQN…NMLG), 153–192 (FFTS…CSVI), 197–236 (GHEG…GRTL), and 240–279 (GHHD…EEAP). Residues 281–352 (WLESDSCQKC…VCDSCYDSIK (72 aa)) form an FYVE-type zinc finger. Zn(2+)-binding residues include Cys287, Cys290, Cys314, Cys317, Cys322, Cys325, Cys344, and Cys347. One copy of the WD 7 repeat lies at 364–403 (EGKHNISHMSMDIARGLMVTCGTDRIVKIWDMTPVVGCSL). Ser408 carries the post-translational modification Phosphoserine.

In terms of assembly, binds PtdIns3P in vitro with high specificity over other phosphoinositides. Interacts (via WD repeat 2) with tyrosine-phosphorylated TLR3 (via TIR domain) in response to poly(I:C). Interacts with TICAM1 in response to poly(I:C). Interacts with TLR4 in response to LPS.

The protein resides in the early endosome. Functionally, positively regulates TLR3- and TLR4-mediated signaling pathways by bridging the interaction between TLR3 or TLR4 and TICAM1. Promotes TLR3/4 ligand-induced activation of transcription factors IRF3 and NF-kappa-B, as well as the production of IFN-beta and inflammatory cytokines. This is WD repeat and FYVE domain-containing protein 1 (WDFY1) from Homo sapiens (Human).